The sequence spans 187 residues: METLTSSSQSLISSPMSKKDYSSEIICAFDIGAKNPARTVLEVKDNSVRVLDISKLDWSSDWERRIAKDLSQYEYTTVLLERQPRRSPYVKFIYFIKGFLYHTSATKVICVSPVMSGNSYRDRKKRSVEAFFDWMDIFGLRDSVPDRRKLDDVADSFNLAMRYVLDKWNTNYTHYNRCKSRNYIKKM.

This sequence belongs to the RuvC family. Poxviruses-type subfamily. Mg(2+) is required as a cofactor.

In terms of biological role, plays a role in DNA replication by cleaving viral DNA concatamers to yield unit-length viral genomes. The concatamer junctions contain inverted repeat sequences that can be extruded as cruciforms, yielding Holliday junctions that A22 protein cleaves. The polypeptide is Resolvase OPG149 (OPG149) (Variola virus (isolate Human/India/Ind3/1967) (VARV)).